The primary structure comprises 159 residues: Transcriptional repressor NrdR (159 aa).

The interval M1–D21 is disordered. The segment at C3–C34 is a zinc-finger region. In terms of domain architecture, ATP-cone spans L49 to E139.

The protein belongs to the NrdR family. Requires Zn(2+) as cofactor.

Negatively regulates transcription of bacterial ribonucleotide reductase nrd genes and operons by binding to NrdR-boxes. The chain is Transcriptional repressor NrdR from Streptococcus thermophilus (strain CNRZ 1066).